A 338-amino-acid polypeptide reads, in one-letter code: UPF0194 membrane protein in asrC 5'region (338 aa).

Residues 1-23 (MAISPKKRALALVVVLIVAGAVA) form the signal peptide. The stretch at 148 to 207 (KQSLDNAAAALKTARANLDRAQQALTLAIKGPRKEDIAAARQQLQADKAGLSLARRELTD) forms a coiled coil.

It belongs to the UPF0194 family.

The protein localises to the periplasm. This is UPF0194 membrane protein in asrC 5'region from Acidithiobacillus ferridurans.